We begin with the raw amino-acid sequence, 110 residues long: uncharacterized protein (110 aa).

This sequence belongs to the HesB/IscA family.

This is an uncharacterized protein from Rickettsia prowazekii (strain Madrid E).